The following is a 464-amino-acid chain: RCC1-like G exchanging factor-like protein (464 aa).

The N-terminal 37 residues, 1–37 (MALVALVAGARLGRRLSGPGLGRGHWTAAGRSRSRRE), are a transit peptide targeting the mitochondrion. RCC1 repeat units lie at residues 58 to 124 (ADRV…LSSK), 128 to 191 (VTKV…VLTD), 193 to 247 (EGVF…FLTD), 248 to 300 (KGEV…AVSA), 302 to 353 (GGLF…VLNG), 354 to 411 (EGHV…ALTN), and 412 to 461 (KGEL…TLAK).

Forms a regulatory protein-RNA complex, consisting of RCC1L, NGRN, RPUSD3, RPUSD4, TRUB2, FASTKD2 and 16S mt-rRNA. Interacts with 16S mt-rRNA; this interaction is direct. Interacts with OPA1; this interaction is direct. As to quaternary structure, asociates with the mitochondrial ribosome large subunit (mt-LSU). In terms of assembly, asociates with the mitochondrial ribosome small subunit (mt-SSU). Ubiquitous.

The protein resides in the mitochondrion membrane. Its subcellular location is the mitochondrion inner membrane. Guanine nucleotide exchange factor (GEF) for mitochondrial dynamin-related GTPase OPA1. Activates OPA1, by exchanging bound GDP for free GTP, and drives OPA1 and MFN1-dependent mitochondrial fusion. Plays an essential role in mitochondrial ribosome biogenesis. As a component of a functional protein-RNA module, consisting of RCC1L, NGRN, RPUSD3, RPUSD4, TRUB2, FASTKD2 and 16S mitochondrial ribosomal RNA (16S mt-rRNA), controls 16S mt-rRNA abundance and is required for intra-mitochondrial translation of core subunits of the oxidative phosphorylation system. In terms of biological role, plays an essential role in mitochondrial ribosome biogenesis via its association with GTPases that play a role in the assembly of the large ribosome subunit. Functionally, plays an essential role in mitochondrial ribosome biogenesis via its association with GTPases that play a role in the assembly of the small ribosome subunit. The polypeptide is RCC1-like G exchanging factor-like protein (Homo sapiens (Human)).